A 288-amino-acid polypeptide reads, in one-letter code: Xyloglucan endotransglucosylase protein 8 (288 aa).

Residues 1–25 (MAASPYSIFAVQLLLLASWMLSSSS) form the signal peptide. Residues 26–215 (SNFNQDFNIA…WTQAPFTTSY (190 aa)) form the GH16 domain. Glu-102 acts as the Nucleophile in catalysis. Glu-106 serves as the catalytic Proton donor. Glu-106 is a xyloglucan binding site. Asn-110 is a glycosylation site (N-linked (GlcNAc...) asparagine). Residues 119–121 (HTN), 129–131 (ERE), 194–195 (EW), and Gly-199 each bind xyloglucan. Cystine bridges form between Cys-224-Cys-233 and Cys-268-Cys-282. Arg-273 is a xyloglucan binding site.

It belongs to the glycosyl hydrolase 16 family. XTH group 2 subfamily. Post-translationally, contains at least one intrachain disulfide bond essential for its enzymatic activity. As to expression, highly expressed in mature fruits. Very low expression in leaves, flowers, calyces and stems.

Its subcellular location is the secreted. The protein localises to the cell wall. It is found in the extracellular space. It localises to the apoplast. It carries out the reaction breaks a beta-(1-&gt;4) bond in the backbone of a xyloglucan and transfers the xyloglucanyl segment on to O-4 of the non-reducing terminal glucose residue of an acceptor, which can be a xyloglucan or an oligosaccharide of xyloglucan.. Catalyzes xyloglucan endotransglycosylation (XET). Cleaves and religates xyloglucan polymers. Does not catalyze xyloglucan endohydrolysis (XEH). Overexpression in Arabidopsis transgenic plants causes accelerated dark-induced leaf senescence and higher lipid peroxidation of the leaf cells. Overexpression in transgenic tomato plants promotes fruit ripening and softening. Probably involved in cell wall restructuring during postharvest fruit softening. This chain is Xyloglucan endotransglucosylase protein 8, found in Diospyros kaki (Kaki persimmon).